A 443-amino-acid polypeptide reads, in one-letter code: Flagellum-specific ATP synthase (443 aa).

ATP is bound at residue 169–176 (AGAGVGKS).

Belongs to the ATPase alpha/beta chains family.

It is found in the cytoplasm. It carries out the reaction ATP + H2O + 4 H(+)(in) = ADP + phosphate + 5 H(+)(out). Its function is as follows. Probable catalytic subunit of a protein translocase for flagellum-specific export, or a proton translocase involved in local circuits at the flagellum. In Aquifex aeolicus (strain VF5), this protein is Flagellum-specific ATP synthase (fliI).